We begin with the raw amino-acid sequence, 286 residues long: MLKTVHQKLLHHTRPLLAWLKLLWRRIDEDHMTTLAGNLAYVSLLSLVPLIAVVFALFAAFPMFSEVSVQIRHFIFANFIPATGDVIQGYIEQFVANSSRMTAVGAFGLIVTSLLLMYSIDSALNTIWRSTRSRPKVYSFAVYWMILTLGPLLAGASLAISSYLLSLRWASDLDGVIDNLLRLFPLILSWAAFWLLYSIVPTTQVRNRDAVIGALVAALLFEAGKKAFALYITTFPSYQLIYGVISVVPILFVWVYWTWCIVLLGAEITVTLGEYRKLKTEETEQP.

7 helical membrane-spanning segments follow: residues 44–64 (LLSL…FPMF), 74–94 (FIFA…IEQF), 104–124 (VGAF…DSAL), 140–160 (FAVY…SLAI), 183–203 (LFPL…VPTT), 210–230 (AVIG…AFAL), and 244–264 (VISV…IVLL).

It belongs to the UPF0761 family.

Its subcellular location is the cell inner membrane. This Klebsiella pneumoniae subsp. pneumoniae (strain ATCC 700721 / MGH 78578) protein is UPF0761 membrane protein KPN78578_41360.